A 393-amino-acid polypeptide reads, in one-letter code: Stearoyl-[acyl-carrier-protein] 9-desaturase, chloroplastic (393 aa).

Residues 1-30 (MALNINGVSLKSHKMLPFPCSSARSERVFM) constitute a chloroplast transit peptide. Fe cation-binding residues include E135, E173, H176, E259, and H262.

It belongs to the fatty acid desaturase type 2 family. As to quaternary structure, homodimer. The cofactor is Fe(2+).

It localises to the plastid. Its subcellular location is the chloroplast. It catalyses the reaction octadecanoyl-[ACP] + 2 reduced [2Fe-2S]-[ferredoxin] + O2 + 2 H(+) = (9Z)-octadecenoyl-[ACP] + 2 oxidized [2Fe-2S]-[ferredoxin] + 2 H2O. The protein operates within lipid metabolism; fatty acid metabolism. Its function is as follows. Converts stearoyl-ACP to oleoyl-ACP by introduction of a cis double bond between carbons 9 and 10 of the acyl chain. The chain is Stearoyl-[acyl-carrier-protein] 9-desaturase, chloroplastic from Solanum tuberosum (Potato).